The following is a 418-amino-acid chain: Hydroxysteroid dehydrogenase-like protein 2 (418 aa).

NADP(+) is bound by residues 17-23 (GASRGIG), Lys42, and Asp74. Residue Lys42 is modified to N6-(2-hydroxyisobutyryl)lysine. Position 116 is an N6-acetyllysine (Lys116). Tyr168 serves as the catalytic Proton acceptor. Residue Lys172 coordinates NADP(+). Residues 287-310 (STGAVPEFKEEKPQPQPKPRSGAV) form a disordered region. Residues 306 to 415 (RSGAVEETFR…KLEKLMNQMN (110 aa)) form the SCP2 domain. Residue Lys318 is modified to N6-succinyllysine.

It belongs to the short-chain dehydrogenases/reductases (SDR) family.

It localises to the peroxisome. It is found in the mitochondrion. Its function is as follows. Has apparently no steroid dehydrogenase activity. Controls bile acid (BA) and lipid metabolism in response to nutritional cues. In Pongo abelii (Sumatran orangutan), this protein is Hydroxysteroid dehydrogenase-like protein 2 (HSDL2).